The following is a 118-amino-acid chain: Phosphoribosyl-AMP cyclohydrolase (118 aa).

Mg(2+) is bound at residue D87. A Zn(2+)-binding site is contributed by C88. Positions 89 and 91 each coordinate Mg(2+). 2 residues coordinate Zn(2+): C104 and C111.

It belongs to the PRA-CH family. As to quaternary structure, homodimer. Requires Mg(2+) as cofactor. It depends on Zn(2+) as a cofactor.

Its subcellular location is the cytoplasm. It catalyses the reaction 1-(5-phospho-beta-D-ribosyl)-5'-AMP + H2O = 1-(5-phospho-beta-D-ribosyl)-5-[(5-phospho-beta-D-ribosylamino)methylideneamino]imidazole-4-carboxamide. It functions in the pathway amino-acid biosynthesis; L-histidine biosynthesis; L-histidine from 5-phospho-alpha-D-ribose 1-diphosphate: step 3/9. In terms of biological role, catalyzes the hydrolysis of the adenine ring of phosphoribosyl-AMP. The chain is Phosphoribosyl-AMP cyclohydrolase from Corynebacterium glutamicum (strain ATCC 13032 / DSM 20300 / JCM 1318 / BCRC 11384 / CCUG 27702 / LMG 3730 / NBRC 12168 / NCIMB 10025 / NRRL B-2784 / 534).